Here is a 126-residue protein sequence, read N- to C-terminus: MQRTMLRGKLHRVHVTQVDLHYEGSCAIDQDFLDAAGILEYEAIDIYNVDNGQRFSTYAIAAERGSRIISVNGAAARCACVGDLLIICAYVQMPDEEARHHAPRVAYFDQHNQLQRTAKALPVQMA.

Catalysis depends on serine 25, which acts as the Schiff-base intermediate with substrate; via pyruvic acid. Pyruvic acid (Ser) is present on serine 25. Threonine 57 contacts substrate. Catalysis depends on tyrosine 58, which acts as the Proton donor. Position 73–75 (73–75 (GAA)) interacts with substrate.

This sequence belongs to the PanD family. As to quaternary structure, heterooctamer of four alpha and four beta subunits. Requires pyruvate as cofactor. Is synthesized initially as an inactive proenzyme, which is activated by self-cleavage at a specific serine bond to produce a beta-subunit with a hydroxyl group at its C-terminus and an alpha-subunit with a pyruvoyl group at its N-terminus.

It localises to the cytoplasm. The catalysed reaction is L-aspartate + H(+) = beta-alanine + CO2. Its pathway is cofactor biosynthesis; (R)-pantothenate biosynthesis; beta-alanine from L-aspartate: step 1/1. Its function is as follows. Catalyzes the pyruvoyl-dependent decarboxylation of aspartate to produce beta-alanine. The protein is Aspartate 1-decarboxylase of Sodalis glossinidius (strain morsitans).